We begin with the raw amino-acid sequence, 490 residues long: Cytochrome P450 71A21 (490 aa).

Residues 1–21 (MESMTMIILQSLIIFITILFF) form a helical membrane-spanning segment. Cys432 contributes to the heme binding site.

This sequence belongs to the cytochrome P450 family. Heme serves as cofactor.

It is found in the membrane. The polypeptide is Cytochrome P450 71A21 (CYP71A21) (Arabidopsis thaliana (Mouse-ear cress)).